We begin with the raw amino-acid sequence, 208 residues long: 3-isopropylmalate dehydratase small subunit 2 (208 aa).

This sequence belongs to the LeuD family. LeuD type 1 subfamily. In terms of assembly, heterodimer of LeuC and LeuD.

It carries out the reaction (2R,3S)-3-isopropylmalate = (2S)-2-isopropylmalate. It participates in amino-acid biosynthesis; L-leucine biosynthesis; L-leucine from 3-methyl-2-oxobutanoate: step 2/4. Catalyzes the isomerization between 2-isopropylmalate and 3-isopropylmalate, via the formation of 2-isopropylmaleate. The sequence is that of 3-isopropylmalate dehydratase small subunit 2 (leuD2) from Salmonella typhimurium (strain LT2 / SGSC1412 / ATCC 700720).